The chain runs to 255 residues: Putative glutamine amidotransferase YafJ (255 aa).

The active-site For GATase activity is the Cys2. In terms of domain architecture, Glutamine amidotransferase type-2 spans 2-251 (CELLGMSANV…PGEWRLFCLG (250 aa)).

This is Putative glutamine amidotransferase YafJ (yafJ) from Escherichia coli (strain K12).